The primary structure comprises 715 residues: MSMFNKVVKEFQWGQHKVRLETGEVARQASGAVIVDVEDTVVLATVVGAKSAKPGQDFFPLTVDYLEKTYSAGKIPGGFFRREGRPSEHETLTSRLIDRPLRPLFPEGFYNEVQVVIHVLSVNPEIPADIPALIGASAALAVSGLPFNGPVGAARVAYIDNAYVLNPTRDQLKASSLDLVVAGTERAVLMVESEADQLSEEVMLGAVVFGHEQMQIAIDAIHELVRDGGKPEWDWQPAAKNEALIARVTELAQNDLLAAYQLRDKQARSAKLKEVYAATSAKLEEDALAAGTVAADKATVGNVLFDIEAKIVRSQILNGEPRIDGRDTRTVRPIEIRTGVLPRTHGSALFTRGETQALVVATLGTKGDEQIIDALEGEYRERFMLHYNMPPFATGETGRVGSPKRREIGHGRLAKRALVKCLPSADEFGYSIRVVSEITESNGSSSMASVCGGCLALMDAGVPMKAHVAGIAMGLILEGNKFAVLTDILGDEDHLGDMDFKVAGTEQGVTALQMDIKIQGITKEIMQVALAQAKEGRLHILGKMTSAVSGANTQLSEFAPRMITVKINPEKIRDVIGKGGSVIRALTEETGTTIDISDDGVVTIASTSSEGMAEAKKRIEQITAEIEVGQVYEGTVLKLLDFGAIVNLLPGKDGLLHISEIVNERVKDINDYLKEGQQVKVKVIQTDEKGRVRLSAKALLNEAAAAAQSDTPPQQ.

The Mg(2+) site is built by aspartate 493 and aspartate 499. A KH domain is found at 560-619; the sequence is PRMITVKINPEKIRDVIGKGGSVIRALTEETGTTIDISDDGVVTIASTSSEGMAEAKKRI. The S1 motif domain maps to 629–697; it reads GQVYEGTVLK…EKGRVRLSAK (69 aa).

It belongs to the polyribonucleotide nucleotidyltransferase family. The cofactor is Mg(2+).

Its subcellular location is the cytoplasm. The catalysed reaction is RNA(n+1) + phosphate = RNA(n) + a ribonucleoside 5'-diphosphate. Functionally, involved in mRNA degradation. Catalyzes the phosphorolysis of single-stranded polyribonucleotides processively in the 3'- to 5'-direction. This is Polyribonucleotide nucleotidyltransferase from Burkholderia orbicola (strain MC0-3).